We begin with the raw amino-acid sequence, 445 residues long: Rab GDP dissociation inhibitor beta (445 aa).

M1 bears the N-acetylmethionine mark. N6-succinyllysine is present on K57. K112 is modified (N6-acetyllysine). At S130 the chain carries Phosphoserine. Position 269 is an N6-acetyllysine (K269). S382 is subject to Phosphoserine.

This sequence belongs to the Rab GDI family. Interacts with RHOH. Interacts with the GDP-bound inactive forms of RAB3A, RAB3B, RAB3C, RAB5A, RAB5B, RAB5C, RAB8A, RAB8B, RAB10, RAB12, RAB35, and RAB43; binds RAB3D to a lesser extent. Interacts with DZIP1; this interaction negatively regulates the interaction of GDI2 with GDP-bound RAB8A.

It is found in the cytoplasm. The protein localises to the membrane. The protein resides in the golgi apparatus. Its subcellular location is the trans-Golgi network. Functionally, GDP-dissociation inhibitor preventing the GDP to GTP exchange of most Rab proteins. By keeping these small GTPases in their inactive GDP-bound form regulates intracellular membrane trafficking. Negatively regulates protein transport to the cilium and ciliogenesis through the inhibition of RAB8A. This chain is Rab GDP dissociation inhibitor beta (GDI2), found in Canis lupus familiaris (Dog).